Here is a 367-residue protein sequence, read N- to C-terminus: tRNA N6-adenosine threonylcarbamoyltransferase (367 aa).

The Fe cation site is built by H123 and H127. Residues 145-149 (LVSGG), D178, G191, and N288 each bind substrate. Position 316 (D316) interacts with Fe cation.

This sequence belongs to the KAE1 / TsaD family. Fe(2+) is required as a cofactor.

The protein resides in the cytoplasm. It catalyses the reaction L-threonylcarbamoyladenylate + adenosine(37) in tRNA = N(6)-L-threonylcarbamoyladenosine(37) in tRNA + AMP + H(+). Its function is as follows. Required for the formation of a threonylcarbamoyl group on adenosine at position 37 (t(6)A37) in tRNAs that read codons beginning with adenine. Is involved in the transfer of the threonylcarbamoyl moiety of threonylcarbamoyl-AMP (TC-AMP) to the N6 group of A37, together with TsaE and TsaB. TsaD likely plays a direct catalytic role in this reaction. The polypeptide is tRNA N6-adenosine threonylcarbamoyltransferase (Caulobacter vibrioides (strain ATCC 19089 / CIP 103742 / CB 15) (Caulobacter crescentus)).